Reading from the N-terminus, the 363-residue chain is Phosphoserine aminotransferase (363 aa).

Position 42 (R42) interacts with L-glutamate. Pyridoxal 5'-phosphate-binding positions include 76–77 (GR), W102, T156, D175, and Q198. K199 is subject to N6-(pyridoxal phosphate)lysine. Position 240-241 (240-241 (NT)) interacts with pyridoxal 5'-phosphate.

This sequence belongs to the class-V pyridoxal-phosphate-dependent aminotransferase family. SerC subfamily. In terms of assembly, homodimer. Pyridoxal 5'-phosphate serves as cofactor.

It is found in the cytoplasm. It catalyses the reaction O-phospho-L-serine + 2-oxoglutarate = 3-phosphooxypyruvate + L-glutamate. The catalysed reaction is 4-(phosphooxy)-L-threonine + 2-oxoglutarate = (R)-3-hydroxy-2-oxo-4-phosphooxybutanoate + L-glutamate. The protein operates within amino-acid biosynthesis; L-serine biosynthesis; L-serine from 3-phospho-D-glycerate: step 2/3. It functions in the pathway cofactor biosynthesis; pyridoxine 5'-phosphate biosynthesis; pyridoxine 5'-phosphate from D-erythrose 4-phosphate: step 3/5. Catalyzes the reversible conversion of 3-phosphohydroxypyruvate to phosphoserine and of 3-hydroxy-2-oxo-4-phosphonooxybutanoate to phosphohydroxythreonine. The chain is Phosphoserine aminotransferase from Shewanella sp. (strain W3-18-1).